The primary structure comprises 1098 residues: Paired amphipathic helix protein Sin3b (1098 aa).

Positions 1–25 (MAHAGSGGSAGRGFGGSRWGRSGSG) are enriched in gly residues. The segment at 1–26 (MAHAGSGGSAGRGFGGSRWGRSGSGG) is disordered. Residues 1–299 (MAHAGSGGSA…VGKYGTLQEF (299 aa)) form an interaction with CRY1 region. PAH domains follow at residues 30–100 (LPVH…LPLG) and 145–230 (VPLE…LPEA). The tract at residues 52-98 (PATYNGFLEIMKEFKSQSIDTPGVIRRVSQLFHEHPDLIVGFNAFLP) is interaction with REST. The segment covering 238-247 (NGSCEMNSGQ) has biased composition (polar residues). The interval 238-274 (NGSCEMNSGQKNEEKSLEHNKKRSRPSLLRPVSAPAK) is disordered. Residues 275–499 (KKMKLRGTKD…CLGGTSEVIQ (225 aa)) form an interaction with NCOR1 region. Residues 283–360 (KDLSIAAVGK…AQFKSFLGVK (78 aa)) form the PAH 3 domain. The interaction with SUDS3 and HDAC1 stretch occupies residues 383 to 550 (ASCKRIGSSY…REAQQGFNKI (168 aa)). The segment at 661–702 (QQCPGTSDDSADERDRDRDSAEPERRRPTDEKPPADASPEPP) is disordered. Phosphoserine occurs at positions 667 and 670. Over residues 673–694 (ERDRDRDSAEPERRRPTDEKPP) the composition is skewed to basic and acidic residues.

Component of the SIN3B complex, which includes SIN3B, HDAC2 or HDAC1, PHF12 and MORF4L1. Interacts with FOXK1/MNF, MXI, MAD, NCOR1 and SAP30. Interaction with SUDS3 enhances the interaction with HDAC1 to form a complex. Interacts with CRY1, HCFC1, MAD3, MAD4, MAEL, REST, RNF220 and SETDB1. Interacts with C6orf89. Interacts with MYT1L. Ubiquitinated by RNF220 that leads to proteasomal degradation.

The protein localises to the nucleus. Acts as a transcriptional repressor. Interacts with MXI1 to repress MYC responsive genes and antagonize MYC oncogenic activities. Interacts with MAD-MAX heterodimers by binding to MAD. The heterodimer then represses transcription by tethering SIN3B to DNA. Also forms a complex with FOXK1 which represses transcription. With FOXK1, regulates cell cycle progression probably by repressing cell cycle inhibitor genes expression. As part of the SIN3B complex represses transcription and counteracts the histone acetyltransferase activity of EP300 through the recognition H3K27ac marks by PHF12 and the activity of the histone deacetylase HDAC2. SIN3B complex is recruited downstream of the constitutively active genes transcriptional start sites through interaction with histones and mitigates histone acetylation and RNA polymerase II progression within transcribed regions contributing to the regulation of transcription. This Mus musculus (Mouse) protein is Paired amphipathic helix protein Sin3b (Sin3b).